A 197-amino-acid polypeptide reads, in one-letter code: 7-methyl-GTP pyrophosphatase (197 aa).

Catalysis depends on aspartate 74, which acts as the Proton acceptor.

This sequence belongs to the Maf family. YceF subfamily. The cofactor is a divalent metal cation.

It localises to the cytoplasm. It catalyses the reaction N(7)-methyl-GTP + H2O = N(7)-methyl-GMP + diphosphate + H(+). In terms of biological role, nucleoside triphosphate pyrophosphatase that hydrolyzes 7-methyl-GTP (m(7)GTP). May have a dual role in cell division arrest and in preventing the incorporation of modified nucleotides into cellular nucleic acids. The protein is 7-methyl-GTP pyrophosphatase of Saccharophagus degradans (strain 2-40 / ATCC 43961 / DSM 17024).